A 217-amino-acid polypeptide reads, in one-letter code: Pyrophosphatase PpaX (217 aa).

Asp-11 functions as the Nucleophile in the catalytic mechanism.

The protein belongs to the HAD-like hydrolase superfamily. PpaX family. Mg(2+) serves as cofactor.

The enzyme catalyses diphosphate + H2O = 2 phosphate + H(+). Hydrolyzes pyrophosphate formed during P-Ser-HPr dephosphorylation by HPrK/P. Might play a role in controlling the intracellular pyrophosphate pool. The polypeptide is Pyrophosphatase PpaX (Listeria monocytogenes serotype 4b (strain CLIP80459)).